A 171-amino-acid polypeptide reads, in one-letter code: Allophycocyanin subunit beta-18 (171 aa).

Asn72 bears the N4-methylasparagine mark. A (2R,3E)-phycocyanobilin-binding site is contributed by Cys82.

This sequence belongs to the phycobiliprotein family. In terms of assembly, heterodimer of an alpha and a beta chain. Contains one covalently linked bilin chromophore.

The protein resides in the plastid. It is found in the chloroplast thylakoid membrane. In terms of biological role, light-harvesting photosynthetic bile pigment-protein from the phycobiliprotein complex. Allophycocyanin has a maximum absorption at approximately 650 nanometers. The polypeptide is Allophycocyanin subunit beta-18 (apcF) (Aglaothamnion neglectum (Red alga)).